Reading from the N-terminus, the 358-residue chain is 4-hydroxybenzoate polyprenyltransferase, mitochondrial (358 aa).

The N-terminal 20 residues, 1–20, are a transit peptide targeting the mitochondrion; it reads MIIKPIASPARYFLRTPSWS. The next 7 helical transmembrane spans lie at 76–96, 107–127, 154–174, 202–222, 229–249, 275–295, and 336–356; these read TGTY…AYAY, LALF…INDL, AISL…QLNP, VVLG…LAGE, VVAP…TIYA, VLCG…IMNG, and NTGY…SFIY.

This sequence belongs to the UbiA prenyltransferase family. Mg(2+) serves as cofactor.

The protein resides in the mitochondrion. Its subcellular location is the mitochondrion inner membrane. The enzyme catalyses an all-trans-polyprenyl diphosphate + 4-hydroxybenzoate = a 4-hydroxy-3-(all-trans-polyprenyl)benzoate + diphosphate. It participates in cofactor biosynthesis; ubiquinone biosynthesis. Catalyzes the prenylation of para-hydroxybenzoate (PHB) with an all-trans polyprenyl group. Mediates the second step in the final reaction sequence of coenzyme Q (CoQ) biosynthesis, which is the condensation of the polyisoprenoid side chain with PHB, generating the first membrane-bound Q intermediate. The polypeptide is 4-hydroxybenzoate polyprenyltransferase, mitochondrial (Schizosaccharomyces pombe (strain 972 / ATCC 24843) (Fission yeast)).